The following is a 360-amino-acid chain: MLVWLAEYLVKYHSGFNVFSYLTFRAIVSLLTALAIALWMGPRMIAFLQKLQIGQVVRNDGPESHFSKRGTPTMGGLLILLSITISTLLWVRLNNPYVWCVLIVLIGYGIVGFVDDYRKVVRKDTKGLIARWKYFWQSVLALGVAFAMYSFGKDTPATQLVVPFFKDVMPQLGVLYILLTYFVIVGTSNAVNLTDGLDGLAIMPTVFVAAGFALVAWATGNVNFANYLHIPYLSHAGELVIVCTAIVGAGLGFLWFNTYPAQVFMGDVGSLALGGALGTIAVLLRQEFLLVIMGGVFVVETLSVILQVGSFKLRGQRIFRMAPIHHHYELKGWPEPRVIVRFWIISLMLVLIGLATLKVR.

10 consecutive transmembrane segments (helical) span residues 27–47 (IVSL…MIAF), 71–91 (TPTM…LLWV), 94–114 (NNPY…VGFV), 132–152 (WKYF…YSFG), 168–188 (VMPQ…VGTS), 199–219 (GLAI…AWAT), 236–256 (AGEL…FLWF), 263–283 (VFMG…IAVL), 288–308 (FLLV…ILQV), and 338–358 (VIVR…ATLK).

It belongs to the glycosyltransferase 4 family. MraY subfamily. Mg(2+) serves as cofactor.

It localises to the cell inner membrane. It catalyses the reaction UDP-N-acetyl-alpha-D-muramoyl-L-alanyl-gamma-D-glutamyl-meso-2,6-diaminopimeloyl-D-alanyl-D-alanine + di-trans,octa-cis-undecaprenyl phosphate = di-trans,octa-cis-undecaprenyl diphospho-N-acetyl-alpha-D-muramoyl-L-alanyl-D-glutamyl-meso-2,6-diaminopimeloyl-D-alanyl-D-alanine + UMP. The protein operates within cell wall biogenesis; peptidoglycan biosynthesis. Functionally, catalyzes the initial step of the lipid cycle reactions in the biosynthesis of the cell wall peptidoglycan: transfers peptidoglycan precursor phospho-MurNAc-pentapeptide from UDP-MurNAc-pentapeptide onto the lipid carrier undecaprenyl phosphate, yielding undecaprenyl-pyrophosphoryl-MurNAc-pentapeptide, known as lipid I. The chain is Phospho-N-acetylmuramoyl-pentapeptide-transferase from Photorhabdus laumondii subsp. laumondii (strain DSM 15139 / CIP 105565 / TT01) (Photorhabdus luminescens subsp. laumondii).